The following is a 486-amino-acid chain: ATP synthase subunit beta 2 (486 aa).

Position 166 to 173 (166 to 173 (GGAGVGKT)) interacts with ATP.

It belongs to the ATPase alpha/beta chains family. In terms of assembly, F-type ATPases have 2 components, CF(1) - the catalytic core - and CF(0) - the membrane proton channel. CF(1) has five subunits: alpha(3), beta(3), gamma(1), delta(1), epsilon(1). CF(0) has three main subunits: a(1), b(2) and c(9-12). The alpha and beta chains form an alternating ring which encloses part of the gamma chain. CF(1) is attached to CF(0) by a central stalk formed by the gamma and epsilon chains, while a peripheral stalk is formed by the delta and b chains.

Its subcellular location is the cell inner membrane. It catalyses the reaction ATP + H2O + 4 H(+)(in) = ADP + phosphate + 5 H(+)(out). Produces ATP from ADP in the presence of a proton gradient across the membrane. The catalytic sites are hosted primarily by the beta subunits. The polypeptide is ATP synthase subunit beta 2 (Gluconobacter oxydans (strain 621H) (Gluconobacter suboxydans)).